Consider the following 604-residue polypeptide: uncharacterized protein (604 aa).

Residues 1–19 (MIVRILLLFIALFTFGVQA) form the signal peptide.

This sequence to H.influenzae HbpA.

This is an uncharacterized protein from Escherichia coli (strain K12).